The primary structure comprises 295 residues: 4-diphosphocytidyl-2-C-methyl-D-erythritol kinase (295 aa).

K10 is a catalytic residue. 97–107 is a binding site for ATP; that stretch reads PIGSGLGGASS. D139 is an active-site residue.

This sequence belongs to the GHMP kinase family. IspE subfamily. Homodimer.

It catalyses the reaction 4-CDP-2-C-methyl-D-erythritol + ATP = 4-CDP-2-C-methyl-D-erythritol 2-phosphate + ADP + H(+). It functions in the pathway isoprenoid biosynthesis; isopentenyl diphosphate biosynthesis via DXP pathway; isopentenyl diphosphate from 1-deoxy-D-xylulose 5-phosphate: step 3/6. Functionally, catalyzes the phosphorylation of the position 2 hydroxy group of 4-diphosphocytidyl-2C-methyl-D-erythritol. The sequence is that of 4-diphosphocytidyl-2-C-methyl-D-erythritol kinase from Blochmanniella pennsylvanica (strain BPEN).